The sequence spans 223 residues: Proteasome subunit beta type-1 (223 aa).

Belongs to the peptidase T1B family. As to quaternary structure, the 26S proteasome consists of a 20S proteasome core and two 19S regulatory subunits. The 20S proteasome core is composed of 28 subunits that are arranged in four stacked rings, resulting in a barrel-shaped structure. The two end rings are each formed by seven alpha subunits, and the two central rings are each formed by seven beta subunits. The catalytic chamber with the active sites is on the inside of the barrel.

Its subcellular location is the cytoplasm. The protein resides in the nucleus. Non-catalytic component of the proteasome, a multicatalytic proteinase complex which is characterized by its ability to cleave peptides with Arg, Phe, Tyr, Leu, and Glu adjacent to the leaving group at neutral or slightly basic pH. The proteasome has an ATP-dependent proteolytic activity. The protein is Proteasome subunit beta type-1 (PBF1) of Petunia hybrida (Petunia).